Reading from the N-terminus, the 178-residue chain is Protein Vhl (178 aa).

It belongs to the VHL family. In terms of assembly, part of a complex with Cul2, Roc1a/Rbx1 and the elongin BC complex. Interacts with sima/Hif1a. Interacts with itself. Interacts with mgr and betaTub56D/tubulin beta-1 chain. Interacts with tubulin alpha-beta heterodimers by itself or in complex with mgr. Interacts with microtubules (MTs).

It participates in protein modification; protein ubiquitination. Involved in development of tracheal vasculature. Probably involved in halting cell migration at the end of vascular tube outgrowth. Possesses E3 ubiquitin ligase activity when in complex with Elongin BC complex, Cul2 and Rox1a/Rbx1, and can target sima/Hif1a for ubiquitination. May play a critical role in promoting microtubule stabilization when tubulins are correctly folded by the prefoldin complex. If tubulin is incorrectly folded, may promote its degradation. In Drosophila melanogaster (Fruit fly), this protein is Protein Vhl.